Reading from the N-terminus, the 622-residue chain is Palmitoyltransferase ZDHHC17 (622 aa).

Topologically, residues 1-294 (MADGPDEYDT…LKADKEFRQK (294 aa)) are cytoplasmic. The tract at residues 1-295 (MADGPDEYDT…KADKEFRQKV (295 aa)) is necessary and sufficient for interaction with DNAJC5 and SNAP25. ANK repeat units follow at residues 41 to 76 (THVD…VRQP), 79 to 108 (ENVT…IVDQ), 113 to 142 (LNST…DPSL), 146 to 175 (EGCS…DVDM), 179 to 209 (NGMT…SVNL), 214 to 243 (HKNT…NVDA), and 247 to 276 (KGES…AKGY). 2 helical membrane-spanning segments follow: residues 295 to 315 (VMLG…DLNI) and 316 to 336 (DSWL…QFLS). The Lumenal segment spans residues 337–347 (KSFFDHSMHSA). A helical membrane pass occupies residues 348 to 368 (LPLGIYLATKFWMYVTWFFWF). Residues 369 to 371 (WND) lie on the Cytoplasmic side of the membrane. Residues 372–392 (LSFLSIHLPFLANSVALFYNF) form a helical membrane-spanning segment. Residues 393–470 (GKSWKSDPGI…GNCVGAGNHR (78 aa)) are Lumenal-facing. One can recognise a DHHC domain in the interval 427-477 (IFCSTCLIRKPVRSKHCGVCNRCIAKFDHHCPWVGNCVGAGNHRYFMGYLF). The active-site S-palmitoyl cysteine intermediate is C457. The helical transmembrane segment at 471-491 (YFMGYLFFLLFMICWMIYGCV) threads the bilayer. The Cytoplasmic portion of the chain corresponds to 492–506 (SYWGLHCETTYTKDG). The helical transmembrane segment at 507 to 526 (FWTYITQIATCSPWMFWMFL) threads the bilayer. Residues 527 to 529 (NSV) lie on the Lumenal side of the membrane. The helical transmembrane segment at 530 to 552 (FHFMWVAVLLMCQMYQITCLGIT) threads the bilayer. At 553–622 (TNERMNARRY…QISGSGYQLV (70 aa)) the chain is on the cytoplasmic side.

The protein belongs to the DHHC palmitoyltransferase family. AKR/ZDHHC17 subfamily. In terms of assembly, interacts (via ANK repeats) with numerous proteins (via the consensus sequence motif [VIAP]-[VIT]-x-x-Q-P). Interacts (via ANK repeats) with CLIP3. Interacts (via ANK repeats) with HTT. Interacts (via ANK repeats) with DNAJC5 (via C-terminus). Interacts (via ANK repeats) with MAP6. Interacts (via ANK repeats) with SNAP23. Interacts (via ANK repeats) with SNAP25. Interacts (via ANK repeats) with EVL. Interacts with SPRED1 and SPRED3. Interacts with GPM6A and OPTN. May interact (via ANK repeats) with SPRED2. May interact with NTRK1; may regulate its localization and function. Post-translationally, autopalmitoylated. Autopalmitoylation has a regulatory role in ZDHHC17-mediated Mg(2+) transport.

The protein localises to the golgi apparatus membrane. Its subcellular location is the cytoplasmic vesicle membrane. It localises to the presynaptic cell membrane. It carries out the reaction L-cysteinyl-[protein] + hexadecanoyl-CoA = S-hexadecanoyl-L-cysteinyl-[protein] + CoA. The catalysed reaction is L-cysteinyl-[protein] + tetradecanoyl-CoA = S-tetradecanoyl-L-cysteinyl-[protein] + CoA. It catalyses the reaction L-cysteinyl-[protein] + octadecanoyl-CoA = S-octadecanoyl-L-cysteinyl-[protein] + CoA. Its function is as follows. Palmitoyltransferase that catalyzes the addition of palmitate onto various protein substrates and is involved in a variety of cellular processes. Has no stringent fatty acid selectivity and in addition to palmitate can also transfer onto target proteins myristate from tetradecanoyl-CoA and stearate from octadecanoyl-CoA. Palmitoyltransferase specific for a subset of neuronal proteins, including SNAP25, DLG4/PSD95, GAD2, SYT1 and HTT. Also palmitoylates neuronal protein GPM6A as well as SPRED1 and SPRED3. Could also play a role in axonogenesis through the regulation of NTRK1 and the downstream ERK1/ERK2 signaling cascade. May be involved in the sorting or targeting of critical proteins involved in the initiating events of endocytosis at the plasma membrane. May play a role in Mg(2+) transport. Could also palmitoylate DNAJC5 and regulate its localization to the Golgi membrane. Palmitoylates CASP6, thereby preventing its dimerization and subsequent activation. The protein is Palmitoyltransferase ZDHHC17 of Rattus norvegicus (Rat).